The primary structure comprises 222 residues: UPF0585 protein CG18661 (222 aa).

Belongs to the UPF0585 family.

This is UPF0585 protein CG18661 from Drosophila melanogaster (Fruit fly).